We begin with the raw amino-acid sequence, 229 residues long: Flagellar L-ring protein (229 aa).

Residues 1–25 (MKQVRLLPPAPVRAVCALAVAALAG) form the signal peptide. Cys26 is lipidated: N-palmitoyl cysteine. Cys26 carries S-diacylglycerol cysteine lipidation.

Belongs to the FlgH family. In terms of assembly, the basal body constitutes a major portion of the flagellar organelle and consists of four rings (L,P,S, and M) mounted on a central rod.

The protein resides in the cell outer membrane. Its subcellular location is the bacterial flagellum basal body. Functionally, assembles around the rod to form the L-ring and probably protects the motor/basal body from shearing forces during rotation. In Burkholderia ambifaria (strain ATCC BAA-244 / DSM 16087 / CCUG 44356 / LMG 19182 / AMMD) (Burkholderia cepacia (strain AMMD)), this protein is Flagellar L-ring protein.